Here is a 266-residue protein sequence, read N- to C-terminus: MVSPDLIRNMVGIVGNIISFGLFLSPVPTFYRIIKNKDVQDFKADPYLATLLNCMLWVFYGLPIVHPNSILVVTINGIGLIIEAVYLTIFFLFSDKKNKKKMGVVLATEALFMAAVVLGVLLGAHTHQRRSLIVGILCAIFGTIMYSSPLTIMSQVVKTKSVEYMPLLLSVVSFLNGLCWTSYALIRLDIFITIPNGLGVLFALMQLILYAIYYRTTPKKQDKNLELPTVAPVAKDTSIVTPVSKDDDVVDGGNASHVTINITIEP.

Over 1–9 (MVSPDLIRN) the chain is Extracellular. Residues 10 to 30 (MVGIVGNIISFGLFLSPVPTF) form a helical membrane-spanning segment. The region spanning 10–97 (MVGIVGNIIS…TIFFLFSDKK (88 aa)) is the MtN3/slv 1 domain. The Cytoplasmic segment spans residues 31–45 (YRIIKNKDVQDFKAD). Residues 46–66 (PYLATLLNCMLWVFYGLPIVH) traverse the membrane as a helical segment. The Extracellular segment spans residues 67 to 69 (PNS). Residues 70-90 (ILVVTINGIGLIIEAVYLTIF) traverse the membrane as a helical segment. The Cytoplasmic segment spans residues 91-101 (FLFSDKKNKKK). A helical transmembrane segment spans residues 102–122 (MGVVLATEALFMAAVVLGVLL). Residues 123 to 131 (GAHTHQRRS) are Extracellular-facing. A helical transmembrane segment spans residues 132–152 (LIVGILCAIFGTIMYSSPLTI). The MtN3/slv 2 domain occupies 133-216 (IVGILCAIFG…LILYAIYYRT (84 aa)). At 153–165 (MSQVVKTKSVEYM) the chain is on the cytoplasmic side. The helical transmembrane segment at 166-186 (PLLLSVVSFLNGLCWTSYALI) threads the bilayer. The Extracellular portion of the chain corresponds to 187–189 (RLD). A helical membrane pass occupies residues 190 to 210 (IFITIPNGLGVLFALMQLILY). The Cytoplasmic segment spans residues 211 to 266 (AIYYRTTPKKQDKNLELPTVAPVAKDTSIVTPVSKDDDVVDGGNASHVTINITIEP).

The protein belongs to the SWEET sugar transporter family. As to quaternary structure, forms homooligomers and/or heterooligomers.

The protein resides in the cell membrane. Functionally, mediates both low-affinity uptake and efflux of sugar across the plasma membrane. In Oryza sativa subsp. indica (Rice), this protein is Bidirectional sugar transporter SWEET7b (SWEET7B).